Consider the following 263-residue polypeptide: uncharacterized protein (263 aa).

31–38 contributes to the ATP binding site; that stretch reads GPTGSGKT.

The protein belongs to the CbbQ/NirQ/NorQ/GpvN family.

This is an uncharacterized protein from Staphylococcus aureus (strain bovine RF122 / ET3-1).